Reading from the N-terminus, the 198-residue chain is Pyridoxal 5'-phosphate synthase subunit PdxT (198 aa).

49-51 is a binding site for L-glutamine; it reads GES. Cys-81 serves as the catalytic Nucleophile. Residues Arg-112 and 140-141 contribute to the L-glutamine site; that span reads IR. Active-site charge relay system residues include His-176 and Glu-178.

This sequence belongs to the glutaminase PdxT/SNO family. As to quaternary structure, in the presence of PdxS, forms a dodecamer of heterodimers. Only shows activity in the heterodimer.

It carries out the reaction aldehydo-D-ribose 5-phosphate + D-glyceraldehyde 3-phosphate + L-glutamine = pyridoxal 5'-phosphate + L-glutamate + phosphate + 3 H2O + H(+). It catalyses the reaction L-glutamine + H2O = L-glutamate + NH4(+). It participates in cofactor biosynthesis; pyridoxal 5'-phosphate biosynthesis. Functionally, catalyzes the hydrolysis of glutamine to glutamate and ammonia as part of the biosynthesis of pyridoxal 5'-phosphate. The resulting ammonia molecule is channeled to the active site of PdxS. The sequence is that of Pyridoxal 5'-phosphate synthase subunit PdxT from Methanocella arvoryzae (strain DSM 22066 / NBRC 105507 / MRE50).